A 245-amino-acid chain; its full sequence is Zinc import ATP-binding protein ZnuC (245 aa).

One can recognise an ABC transporter domain in the interval L27–N244. ATP is bound at residue G59 to T66.

The protein belongs to the ABC transporter superfamily. Zinc importer (TC 3.A.1.15.5) family. In terms of assembly, the complex is composed of two ATP-binding proteins (ZnuC), two transmembrane proteins (ZnuB) and a solute-binding protein (ZnuA).

The protein resides in the cell inner membrane. The catalysed reaction is Zn(2+)(out) + ATP(in) + H2O(in) = Zn(2+)(in) + ADP(in) + phosphate(in) + H(+)(in). Functionally, part of the ABC transporter complex ZnuABC involved in zinc import. Responsible for energy coupling to the transport system. This is Zinc import ATP-binding protein ZnuC from Anaplasma marginale (strain St. Maries).